The sequence spans 159 residues: 3-hydroxyacyl-[acyl-carrier-protein] dehydratase FabZ (159 aa).

Histidine 58 is an active-site residue.

The protein belongs to the thioester dehydratase family. FabZ subfamily.

It localises to the cytoplasm. The enzyme catalyses a (3R)-hydroxyacyl-[ACP] = a (2E)-enoyl-[ACP] + H2O. Its function is as follows. Involved in unsaturated fatty acids biosynthesis. Catalyzes the dehydration of short chain beta-hydroxyacyl-ACPs and long chain saturated and unsaturated beta-hydroxyacyl-ACPs. The chain is 3-hydroxyacyl-[acyl-carrier-protein] dehydratase FabZ from Helicobacter pylori (strain Shi470).